We begin with the raw amino-acid sequence, 211 residues long: Large ribosomal subunit protein uL3 (211 aa).

At glutamine 150 the chain carries N5-methylglutamine.

The protein belongs to the universal ribosomal protein uL3 family. As to quaternary structure, part of the 50S ribosomal subunit. Forms a cluster with proteins L14 and L19. In terms of processing, methylated by PrmB.

In terms of biological role, one of the primary rRNA binding proteins, it binds directly near the 3'-end of the 23S rRNA, where it nucleates assembly of the 50S subunit. This chain is Large ribosomal subunit protein uL3, found in Pseudomonas aeruginosa (strain LESB58).